A 674-amino-acid polypeptide reads, in one-letter code: PTS system glucose-specific EIIBCA component (674 aa).

The PTS EIIB type-1 domain maps to M1–A89. C28 functions as the Phosphocysteine intermediate; for EIIB activity in the catalytic mechanism. One can recognise a PTS EIIC type-1 domain in the interval E117–Q476. The next 10 helical transmembrane spans lie at I126 to F146, Y162 to A182, W193 to A213, V225 to W245, M260 to G280, F303 to W323, P344 to L364, L376 to L396, G409 to F429, and L442 to F462. The PTS EIIA type-1 domain occupies D542–N646. H594 (tele-phosphohistidine intermediate; for EIIA activity) is an active-site residue.

The protein resides in the cell membrane. The enzyme catalyses N(pros)-phospho-L-histidyl-[protein] + D-glucose(out) = D-glucose 6-phosphate(in) + L-histidyl-[protein]. In terms of biological role, the phosphoenolpyruvate-dependent sugar phosphotransferase system (sugar PTS), a major carbohydrate active transport system, catalyzes the phosphorylation of incoming sugar substrates concomitantly with their translocation across the cell membrane. This system is involved in glucose transport. The chain is PTS system glucose-specific EIIBCA component (ptsG) from Corynebacterium glutamicum (Brevibacterium saccharolyticum).